A 556-amino-acid chain; its full sequence is Glutamine--tRNA ligase (556 aa).

The short motif at 34–44 is the 'HIGH' region element; that stretch reads PEPNGFLHIGH. ATP contacts are provided by residues 35–37 and 41–47; these read EPN and HIGHAKA. Positions 67 and 212 each coordinate L-glutamine. ATP-binding positions include Thr231, 261–262, and 269–271; these read RL and MSK. The 'KMSKS' region motif lies at 268-272; that stretch reads LMSKR.

This sequence belongs to the class-I aminoacyl-tRNA synthetase family. Monomer.

The protein localises to the cytoplasm. It carries out the reaction tRNA(Gln) + L-glutamine + ATP = L-glutaminyl-tRNA(Gln) + AMP + diphosphate. This Colwellia psychrerythraea (strain 34H / ATCC BAA-681) (Vibrio psychroerythus) protein is Glutamine--tRNA ligase.